The primary structure comprises 78 residues: U7-lycotoxin-Ls1e (78 aa).

The N-terminal stretch at 1–22 (MKLIIFTGLALLLIVSLIDVEA) is a signal peptide. The propeptide occupies 23–26 (QNEG).

Belongs to the neurotoxin 19 (CSTX) family. 07 (U7-Lctx) subfamily. Post-translationally, contains 4 disulfide bonds. As to expression, expressed by the venom gland.

The protein resides in the secreted. The polypeptide is U7-lycotoxin-Ls1e (Lycosa singoriensis (Wolf spider)).